The primary structure comprises 329 residues: Short-chain dehydrogenase/reductase prx4 (329 aa).

Ser58, Ile60, and Asn81 together coordinate NADP(+). The N-linked (GlcNAc...) asparagine glycan is linked to Asn91. The NADP(+) site is built by Asp98, Asn121, Lys161, Tyr194, Lys198, and Thr229. The active-site Proton acceptor is Tyr194. Lys198 acts as the Lowers pKa of active site Tyr in catalysis. A helical membrane pass occupies residues 238-258; the sequence is GPLMAAGLPVSSAHMVGLAVV.

Belongs to the short-chain dehydrogenases/reductases (SDR) family.

It localises to the membrane. Its pathway is sesquiterpene biosynthesis. Short-chain dehydrogenase/reductase; part of the gene cluster that mediates the biosynthesis of PR-toxin, a bicyclic sesquiterpene belonging to the eremophilane class and acting as a mycotoxin. The first step of the pathway is catalyzed by the aristolochene synthase which performs the cyclization of trans,trans-farnesyl diphosphate (FPP) to the bicyclic sesquiterpene aristolochene. Following the formation of aristolochene, the non-oxygenated aristolochene is converted to the trioxygenated intermediate eremofortin B, via 7-epi-neopetasone. This conversion appears to involve three enzymes, a hydroxysterol oxidase-like enzyme, the quinone-oxidase prx3 that forms the quinone-type-structure in the bicyclic nucleus of aristolochene with the C8-oxo group and the C-3 hydroxyl group, and the P450 monooxygenase ORF6 that introduces the epoxide at the double bond between carbons 1 and 2. No monoxy or dioxy-intermediates have been reported to be released to the broth, so these three early oxidative reactions may be coupled together. Eremofortin B is further oxidized by another P450 monooxygenase, that introduces a second epoxide between carbons 7 and 11 prior to acetylation to eremofortin A by the acetyltransferase ORF8. The second epoxidation may be performed by a second P450 monooxygenase. After the acetylation step, eremofortin A is converted to eremofortin C and then to PR-toxin. First the conversion of eremofortin A to eremofortin C proceeds by oxidation of the side chain of the molecule at C-12 and is catalyzed by the short-chain oxidoreductase prx1. The cytochrome P450 monooxygenase ORF6 is probably also involved in this step. The primary alcohol formed at C-12 is finally oxidized by the short-chain alcohol dehydrogenase prx4 that forms PR-toxin. The protein is Short-chain dehydrogenase/reductase prx4 of Penicillium roqueforti.